The primary structure comprises 1049 residues: MLRSYLHLGRHRTPAFRQPLGRLLRPTASILQYAQSRTLASVSSLESLPEVGDQLHGFTVQEKKQVPELHLTAIRLRHDKTHADYLHIAREDKNNVFGIGFKTNPPDATGVPHILEHTTLCGSEKYPIRDPFFKMLPRSLSNFMNAFTSSDHTMYPFATTNQQDFQNLLSVYLDATMHPLLKEEDFRQEGWRLGPEDPRAIQTQEGNLKPEDILFKGVVYNEMKGQMSDANYLYWIRFQESIFPAINNSGGDPQHITDLTHKQLVEFSKKNYNPSNAKIITYGDMPLADHLKQVGGVLNDFSKGAVDTTVKLPIELRGPINVTVPGPIDTFVSEDRQFKTSTSWYMGDITDTVETFSAGILSSLLLDGYGSPMYKALIESGLGSSFTPNTGLDTSGKIPIFSIGVTGVSEEQAPRVKEEIQRVLQETLQRGFNDEKVQGFLHQLELALRHKTANFGLGVIQKTFTSWFNGSDPMKELAWNEVINAFKSRYEKGGYLEALMQKYLINDNCLTFTMVGTPSFNKELDDKEMARKEKKFEQLTQQHGSVEKAVTELAKAELQLLEVQEKAQHADLSCLPSLRVEDISRQKEHKPVRESKVEGTDIVWREAPTNGLTYFQAVNAFADLPDDLRLLLPLFNDAIMRLGTPTRTMEQWEDLIKLKTGGVSTSNFHTTSPTEMGKYTEGLQFSGFALDKNVPDMLEILTALVTETDFTSPSAPAMIQELLRLTTNGALDAVAGTGHRYALNAAAAGLSRSFWAQEQTSGLAQLQATANLLRDAETSPERLAELIEKLRLIQSFAISKTSGLRVRLVCEPASSTQNESVLQRWVTGLPKVPSPTSQPQRFDLSTPSKKAFYDLPYKVYYSGLALPTVPFTHSSSATLSVLSQLLTHNYLHPEIREKGGAYGAGASNGPVKGLFAFTSYRDPNPANTLKVFKNSGVFARDRAWSDREINEAKLGIFQGLDAPVSVDEEGSRYFLNGITHEMDQRWREQVLDVTAKDVNEVAQTFLVDGTRRSVCLLGEKKDWAESEGWEVRKLSMNPNGSNIPSGDAA.

The transit peptide at methionine 1–leucine 39 directs the protein to the mitochondrion. Histidine 113 contacts Zn(2+). Glutamate 116 (proton acceptor) is an active-site residue. Zn(2+) is bound at residue histidine 117. Glutamate 189 is a catalytic residue. Glutamate 222 provides a ligand contact to Zn(2+).

It belongs to the peptidase M16 family. PreP subfamily. As to quaternary structure, monomer and homodimer; homodimerization is induced by binding of the substrate. Zn(2+) serves as cofactor.

The protein localises to the mitochondrion intermembrane space. The protein resides in the mitochondrion matrix. Its function is as follows. Degrades mitochondrial transit peptides after their cleavage in the intermembrane space or in the matrix, and presequence peptides; clearance of these peptides is required to keep the presequence processing machinery running. Preferentially cleaves the N-terminal side of paired basic amino acid residues. Also degrades other unstructured peptides. May function as an ATP-dependent peptidase as opposed to a metalloendopeptidase. The sequence is that of Presequence protease, mitochondrial (cym1) from Emericella nidulans (strain FGSC A4 / ATCC 38163 / CBS 112.46 / NRRL 194 / M139) (Aspergillus nidulans).